A 398-amino-acid chain; its full sequence is Dihydroorotase (398 aa).

Residues His-58 and His-60 each coordinate Zn(2+). Substrate is bound by residues 60-62 (HFR) and Asn-92. Asp-151, His-178, and His-215 together coordinate Zn(2+). Substrate is bound at residue Asn-256. Asp-283 is a binding site for Zn(2+). The active site involves Asp-283. Substrate contacts are provided by residues His-287 and 297–298 (PG).

It belongs to the metallo-dependent hydrolases superfamily. DHOase family. Class I DHOase subfamily. It depends on Zn(2+) as a cofactor.

The catalysed reaction is (S)-dihydroorotate + H2O = N-carbamoyl-L-aspartate + H(+). It functions in the pathway pyrimidine metabolism; UMP biosynthesis via de novo pathway; (S)-dihydroorotate from bicarbonate: step 3/3. Its function is as follows. Catalyzes the reversible cyclization of carbamoyl aspartate to dihydroorotate. The protein is Dihydroorotase of Clostridium botulinum (strain Eklund 17B / Type B).